Consider the following 121-residue polypeptide: Small ribosomal subunit protein uS11 (121 aa).

Belongs to the universal ribosomal protein uS11 family. Part of the 30S ribosomal subunit. Interacts with proteins S7 and S18. Binds to IF-3.

Located on the platform of the 30S subunit, it bridges several disparate RNA helices of the 16S rRNA. Forms part of the Shine-Dalgarno cleft in the 70S ribosome. This Mycoplasma pneumoniae (strain ATCC 29342 / M129 / Subtype 1) (Mycoplasmoides pneumoniae) protein is Small ribosomal subunit protein uS11.